The chain runs to 312 residues: Taste receptor type 2 member 7 (312 aa).

At 1–9 (MTYETDTTL) the chain is on the extracellular side. The helical transmembrane segment at 10–30 (MFVAVCEALVGILGNAFIALV) threads the bilayer. Topologically, residues 31–49 (NFMGWMKNRKITAIDLILS) are cytoplasmic. The helical transmembrane segment at 50 to 70 (SLAMSRICLQCIILLDCIILV) threads the bilayer. The Extracellular segment spans residues 71–101 (QYPDTYNRGKEMRIIDFFWTLTNHLSVWFAT). The chain crosses the membrane as a helical span at residues 102–122 (CLSIFYFFKIANFFHPLFLWI). Residues 123–128 (KWRIDK) are Cytoplasmic-facing. Residues 129 to 149 (LILRTLLACLILSLCFSLPVT) traverse the membrane as a helical segment. At 150–187 (ENLTDDFRRCVKTKERINSTLRCKLNKAGYASVKVNLN) the chain is on the extracellular side. N-linked (GlcNAc...) asparagine glycans are attached at residues asparagine 151 and asparagine 167. A helical transmembrane segment spans residues 188–208 (LVMLFPFSVSLVSFLLLILSL). The Cytoplasmic portion of the chain corresponds to 209-235 (WRHTRQMQLNVTGYNDPSTTAHVKATK). A helical transmembrane segment spans residues 236–256 (AVISFLVLFIVYCLAFLIATS). At 257–266 (SYFMPESELA) the chain is on the extracellular side. The chain crosses the membrane as a helical span at residues 267–287 (VIWGELIALIYPSSHSFILIL). The Cytoplasmic portion of the chain corresponds to 288 to 312 (GNSKLKQASVRVLCRVKTMLKGRKY).

The protein belongs to the G-protein coupled receptor T2R family. In terms of tissue distribution, expressed in subsets of taste receptor cells of the tongue and palate epithelium and exclusively in gustducin-positive cells. Expressed in 15% taste bud cells in circumvallate and foliate papillae but only in 2% in fungiform papillae. Expressed in the duodenum, antrum and fundus (part of the stomach) and in gastric endocrine cells.

The protein localises to the membrane. Its function is as follows. Gustducin-coupled receptor implicated in the perception of bitter compounds in the oral cavity and the gastrointestinal tract. Signals through PLCB2 and the calcium-regulated cation channel TRPM5. This chain is Taste receptor type 2 member 7 (Tas2r7), found in Rattus norvegicus (Rat).